Here is a 152-residue protein sequence, read N- to C-terminus: CASP-like protein 5C1 (152 aa).

Residues 1-12 (MVRTTASFGTSS) lie on the Cytoplasmic side of the membrane. The chain crosses the membrane as a helical span at residues 13 to 33 (SFVLRLGQTLFSSASLLFMCF). Over 34-44 (NDDEDFYAYTT) the chain is Extracellular. Residues 45 to 65 (FCYLVTVMGLVTPWSVTLALM) form a helical membrane-spanning segment. Residues 66-80 (EAYSILVKKLPMQAT) lie on the Cytoplasmic side of the membrane. The helical transmembrane segment at 81 to 101 (VISVIVAGDFVLSFLSLGGAC) threads the bilayer. The Extracellular portion of the chain corresponds to 102–126 (STASVAVLLMDAGEKQCDRYKLSAT). Residues 127-147 (MAFLSSFLSFASTFFNFCLLP) form a helical membrane-spanning segment. Over 148 to 152 (SLMSH) the chain is Cytoplasmic.

This sequence belongs to the Casparian strip membrane proteins (CASP) family. As to quaternary structure, homodimer and heterodimers.

The protein resides in the cell membrane. This is CASP-like protein 5C1 from Arabidopsis thaliana (Mouse-ear cress).